We begin with the raw amino-acid sequence, 624 residues long: Leucine-rich repeat and IQ domain-containing protein 3 (624 aa).

3 LRR repeats span residues 51–72, 73–94, and 98–119; these read SLRV…QSCI, KLIK…KFWN, and NLKL…CVLS. Residues 132–179 enclose the LRRCT domain; it reads CPVSLKKGYRHVLVNSIWPLKALDHHVISDEEIIQNWHLPERFKACNH. The region spanning 215-244 is the IQ domain; the sequence is HNSPVLIVQRWIRGFLVRKNLSPVFFHKKK. Residues 553–614 are a coiled coil; sequence KQKLKAEKYR…TKVAIVKTNL (62 aa).

This Homo sapiens (Human) protein is Leucine-rich repeat and IQ domain-containing protein 3 (LRRIQ3).